A 548-amino-acid polypeptide reads, in one-letter code: CTP synthase (548 aa).

The tract at residues 1 to 276 is amidoligase domain; it reads MPTELTDYDP…DQYVMEQLGL (276 aa). Residue Ser25 coordinates CTP. Ser25 serves as a coordination point for UTP. 26–31 is an ATP binding site; sequence GLGKGI. Tyr66 contributes to the L-glutamine binding site. Position 83 (Asp83) interacts with ATP. Residues Asp83 and Glu151 each contribute to the Mg(2+) site. CTP contacts are provided by residues 158–160, 197–202, and Lys233; these read DIE and KTKPTQ. UTP contacts are provided by residues 197–202 and Lys233; that span reads KTKPTQ. The region spanning 303–541 is the Glutamine amidotransferase type-1 domain; the sequence is DIALVGKYAM…VETILETTDT (239 aa). Gly363 contributes to the L-glutamine binding site. Cys390 acts as the Nucleophile; for glutamine hydrolysis in catalysis. L-glutamine-binding positions include 391–394, Glu414, and Arg471; that span reads LGFQ. Residues His514 and Glu516 contribute to the active site.

The protein belongs to the CTP synthase family. As to quaternary structure, homotetramer.

The enzyme catalyses UTP + L-glutamine + ATP + H2O = CTP + L-glutamate + ADP + phosphate + 2 H(+). It carries out the reaction L-glutamine + H2O = L-glutamate + NH4(+). The catalysed reaction is UTP + NH4(+) + ATP = CTP + ADP + phosphate + 2 H(+). Its pathway is pyrimidine metabolism; CTP biosynthesis via de novo pathway; CTP from UDP: step 2/2. With respect to regulation, allosterically activated by GTP, when glutamine is the substrate; GTP has no effect on the reaction when ammonia is the substrate. The allosteric effector GTP functions by stabilizing the protein conformation that binds the tetrahedral intermediate(s) formed during glutamine hydrolysis. Inhibited by the product CTP, via allosteric rather than competitive inhibition. Its function is as follows. Catalyzes the ATP-dependent amination of UTP to CTP with either L-glutamine or ammonia as the source of nitrogen. Regulates intracellular CTP levels through interactions with the four ribonucleotide triphosphates. In Natronomonas pharaonis (strain ATCC 35678 / DSM 2160 / CIP 103997 / JCM 8858 / NBRC 14720 / NCIMB 2260 / Gabara) (Halobacterium pharaonis), this protein is CTP synthase.